We begin with the raw amino-acid sequence, 600 residues long: DNA polymerase alpha subunit B (600 aa).

A disordered region spans residues 112 to 167 (AYTTPSKGPHKRVSSTPETPLTKRSISTRSPHQLLSPSSFSPSATPSQKYSSRTNR). Positions 125–140 (SSTPETPLTKRSISTR) are enriched in polar residues. Residue Ser-126 is modified to Phosphoserine. Phosphothreonine is present on residues Thr-127 and Thr-130. Residues Ser-141, Ser-147, Ser-152, and Ser-154 each carry the phosphoserine modification. The span at 141–158 (SPHQLLSPSSFSPSATPS) shows a compositional bias: low complexity.

Belongs to the DNA polymerase alpha subunit B family. As to quaternary structure, component of the alpha DNA polymerase complex (also known as the alpha DNA polymerase-primase complex) consisting of four subunits: the catalytic subunit POLA1, the regulatory subunit POLA2, and the primase complex subunits PRIM1 and PRIM2 respectively. Within the complex, POLA1 directly interacts with PRIM2. Post-translationally, phosphorylated in a cell cycle-dependent manner, in G2/M phase.

The protein resides in the nucleus. In terms of biological role, accessory subunit of the DNA polymerase alpha complex (also known as the alpha DNA polymerase-primase complex) which plays an essential role in the initiation of DNA synthesis. During the S phase of the cell cycle, the DNA polymerase alpha complex (composed of a catalytic subunit POLA1, an accessory subunit POLA2 and two primase subunits, the catalytic subunit PRIM1 and the regulatory subunit PRIM2) is recruited to DNA at the replicative forks via direct interactions with MCM10 and WDHD1. The primase subunit of the polymerase alpha complex initiates DNA synthesis by oligomerising short RNA primers on both leading and lagging strands. These primers are initially extended by the polymerase alpha catalytic subunit and subsequently transferred to polymerase delta and polymerase epsilon for processive synthesis on the lagging and leading strand, respectively. The polypeptide is DNA polymerase alpha subunit B (Pola2) (Rattus norvegicus (Rat)).